The sequence spans 964 residues: Translation initiation factor IF-2 (964 aa).

Positions 49–357 (QIGSAEPADD…QEFDEMQAPL (309 aa)) are disordered. The span at 62 to 85 (AKPAARKSQTSSKKTSKETTTAKP) shows a compositional bias: low complexity. The segment covering 86–102 (APGPKPGPGPKPTPGPR) has biased composition (pro residues). Low complexity predominate over residues 103 to 117 (PGSSSGPKPGRSSAA). Positions 159–169 (PHAPAPKPKPG) are enriched in pro residues. Composition is skewed to low complexity over residues 190-212 (GLPSAARPGPRPGAGRRTGAPRP) and 242-251 (GQGERMPRPG). 2 stretches are compositionally biased toward gly residues: residues 252–261 (GSQGSRGGSG) and 284–334 (GRGG…GRGG). Basic residues predominate over residues 335–346 (GGRRGRKSRKQR). The tr-type G domain occupies 458-629 (ARPPVVTVMG…AIVLTADAAL (172 aa)). A G1 region spans residues 467-474 (GHVDHGKT). Position 467–474 (467–474 (GHVDHGKT)) interacts with GTP. Residues 492–496 (GITQA) are G2. The segment at 517 to 520 (DTPG) is G3. GTP contacts are provided by residues 517–521 (DTPGH) and 571–574 (NKID). The segment at 571–574 (NKID) is G4. Residues 607-609 (SAR) are G5.

The protein belongs to the TRAFAC class translation factor GTPase superfamily. Classic translation factor GTPase family. IF-2 subfamily.

Its subcellular location is the cytoplasm. One of the essential components for the initiation of protein synthesis. Protects formylmethionyl-tRNA from spontaneous hydrolysis and promotes its binding to the 30S ribosomal subunits. Also involved in the hydrolysis of GTP during the formation of the 70S ribosomal complex. The polypeptide is Translation initiation factor IF-2 (Cutibacterium acnes (strain DSM 16379 / KPA171202) (Propionibacterium acnes)).